Here is a 548-residue protein sequence, read N- to C-terminus: ATP synthase subunit alpha (548 aa).

172-179 (GDRKTGKT) provides a ligand contact to ATP. The segment at 510–548 (QFTTSSGESAAPSEPEAEALAADEVGQETVKVNRPAPKK) is disordered. The segment covering 514–531 (SSGESAAPSEPEAEALAA) has biased composition (low complexity).

Belongs to the ATPase alpha/beta chains family. As to quaternary structure, F-type ATPases have 2 components, CF(1) - the catalytic core - and CF(0) - the membrane proton channel. CF(1) has five subunits: alpha(3), beta(3), gamma(1), delta(1), epsilon(1). CF(0) has three main subunits: a(1), b(2) and c(9-12). The alpha and beta chains form an alternating ring which encloses part of the gamma chain. CF(1) is attached to CF(0) by a central stalk formed by the gamma and epsilon chains, while a peripheral stalk is formed by the delta and b chains.

It is found in the cell membrane. It catalyses the reaction ATP + H2O + 4 H(+)(in) = ADP + phosphate + 5 H(+)(out). In terms of biological role, produces ATP from ADP in the presence of a proton gradient across the membrane. The alpha chain is a regulatory subunit. In Saccharopolyspora erythraea (strain ATCC 11635 / DSM 40517 / JCM 4748 / NBRC 13426 / NCIMB 8594 / NRRL 2338), this protein is ATP synthase subunit alpha.